A 220-amino-acid chain; its full sequence is Ripening-related protein grip22 (220 aa).

The signal sequence occupies residues 1–27 (MAKSALVWLASVCLVFNILSLPFLALG).

This sequence belongs to the kiwellin family. Expressed in ripening fruits.

Its subcellular location is the secreted. The chain is Ripening-related protein grip22 (grip22) from Vitis vinifera (Grape).